A 1486-amino-acid chain; its full sequence is Chromosome partition protein MukB (1486 aa).

Residue 34–41 (GGNGAGKS) participates in ATP binding. Coiled coils occupy residues 326-418 (LEAD…QYNQ), 444-480 (LETFQAKELEATEKMLSLEQKMSMAQTAHSQFEQAYQ), and 509-603 (RHLA…RAPV). The tract at residues 666–783 (PGGSEDQRLN…EVPLFGRAAR (118 aa)) is flexible hinge. 3 coiled-coil regions span residues 835-923 (EAEI…AKLE), 977-1115 (EMLS…TAKA), and 1209-1266 (VEAI…QNVS).

It belongs to the SMC family. MukB subfamily. In terms of assembly, homodimerization via its hinge domain. Binds to DNA via its C-terminal region. Interacts, and probably forms a ternary complex, with MukE and MukF via its C-terminal region. The complex formation is stimulated by calcium or magnesium. Interacts with tubulin-related protein FtsZ.

It localises to the cytoplasm. Its subcellular location is the nucleoid. Functionally, plays a central role in chromosome condensation, segregation and cell cycle progression. Functions as a homodimer, which is essential for chromosome partition. Involved in negative DNA supercoiling in vivo, and by this means organize and compact chromosomes. May achieve or facilitate chromosome segregation by condensation DNA from both sides of a centrally located replisome during cell division. This chain is Chromosome partition protein MukB, found in Shigella boydii serotype 18 (strain CDC 3083-94 / BS512).